The following is a 333-amino-acid chain: MREAMFYEKLDDNKVRCHICPRHCIIKEGERGFCWNRENINGVLYAVGYGKVCSLAIDPIEKKPLFHFYPTTQVVSLAIGGCNFRCLHCQNWTISQFPPDEIPYREMTPEEIVEVAIRYNCPGISYTYTEPTVYYEFMYDTSVIARENGMFNVMITNGYIEKEPLKALPVDAMNIDIKGNADFYKKVCKATLEPVLETCKLAKKLGIWVEVTNLIVPNYNDNIDDLLFIIHFVRDELGRETPLHFSRFHPDYKLTDVPPTPIETLEMARNLAIEEGLKYVYIGNVPGHEGENTYCPNCGALLIERYIFNAKIINLDVETKRCKICGEKIDIVL.

In terms of domain architecture, Radical SAM core spans 67–274; that stretch reads HFYPTTQVVS…LEMARNLAIE (208 aa). Positions 82, 86, and 89 each coordinate [4Fe-4S] cluster.

[4Fe-4S] cluster serves as cofactor.

This is an uncharacterized protein from Methanocaldococcus jannaschii (strain ATCC 43067 / DSM 2661 / JAL-1 / JCM 10045 / NBRC 100440) (Methanococcus jannaschii).